The sequence spans 732 residues: Polyribonucleotide nucleotidyltransferase (732 aa).

Residues Asp-516 and Asp-522 each coordinate Mg(2+). The region spanning Pro-582–Ile-642 is the KH domain. The S1 motif domain occupies Gly-659–Arg-726.

It belongs to the polyribonucleotide nucleotidyltransferase family. It depends on Mg(2+) as a cofactor.

Its subcellular location is the cytoplasm. The catalysed reaction is RNA(n+1) + phosphate = RNA(n) + a ribonucleoside 5'-diphosphate. Functionally, involved in mRNA degradation. Catalyzes the phosphorolysis of single-stranded polyribonucleotides processively in the 3'- to 5'-direction. This chain is Polyribonucleotide nucleotidyltransferase, found in Nitratiruptor sp. (strain SB155-2).